We begin with the raw amino-acid sequence, 1320 residues long: FERM and PDZ domain-containing protein 4 (1320 aa).

The 34-residue stretch at 33 to 66 folds into the WW domain; it reads QVPPYGWEMMTNRDGRDYFINHMTQAIPFDDPRF. The PDZ domain maps to 78–155; it reads KVEMRRDPVL…SILLTVIQPY (78 aa). Positions 204 to 519 constitute an FERM domain; it reads NVLKVYLENG…GYYRLLVDSR (316 aa). Disordered stretches follow at residues 809-847, 897-927, 949-981, 1024-1050, 1114-1139, and 1204-1274; these read APPP…EIPV, YSPE…QKQS, TEFP…PPKV, KRKS…QQGT, PRGP…ADDA, and GHFS…ATFE. Residues 900-913 are compositionally biased toward low complexity; sequence ESSSDSGNETNSSE. Residues 1204 to 1217 show a composition bias toward polar residues; it reads GHFSLQSSQGSSVD. The span at 1223–1232 shows a compositional bias: low complexity; the sequence is GSSSSACATP.

Interacts (via C-terminus) with DLG1, DLG2, DLG3 and DLG4/PSD95. Interacts (via N-terminus) with ARHGEF7; the interaction is mediated by the PDZ domain. Interacts with GPSM2 (via TPR repeat region). As to expression, expressed in various regions of the brain, including cortex, hippocampus, cerebellum, olfactory bulb and medial habenular nucleus.

It is found in the cell projection. It localises to the dendritic spine. Functionally, positive regulator of dendritic spine morphogenesis and density. Required for the maintenance of excitatory synaptic transmission. Binds phosphatidylinositol 4,5-bisphosphate. This is FERM and PDZ domain-containing protein 4 (Frmpd4) from Mus musculus (Mouse).